A 226-amino-acid polypeptide reads, in one-letter code: Peptidyl-prolyl cis-trans isomerase CYP23 (226 aa).

The first 22 residues, Met-1–Ala-22, serve as a signal peptide directing secretion. The 158-residue stretch at Val-34–Tyr-191 folds into the PPIase cyclophilin-type domain.

It belongs to the cyclophilin-type PPIase family. In terms of tissue distribution, ubiquitous. Lower expression in roots.

It localises to the endoplasmic reticulum. The catalysed reaction is [protein]-peptidylproline (omega=180) = [protein]-peptidylproline (omega=0). Its function is as follows. PPIases accelerate the folding of proteins. It catalyzes the cis-trans isomerization of proline imidic peptide bonds in oligopeptides. In Arabidopsis thaliana (Mouse-ear cress), this protein is Peptidyl-prolyl cis-trans isomerase CYP23 (CYP23).